The following is a 215-amino-acid chain: Cytochrome b6 (215 aa).

A helical transmembrane segment spans residues 32–52; the sequence is IFYCLGGITLTCFLVQVATGF. Position 35 (Cys35) interacts with heme c. Heme b contacts are provided by His86 and His100. 3 consecutive transmembrane segments (helical) span residues 90-110, 116-136, and 186-206; these read ASMM…TGGF, LTWV…VTGY, and LHTF…FPMI. Residues His187 and His202 each coordinate heme b.

Belongs to the cytochrome b family. PetB subfamily. In terms of assembly, the 4 large subunits of the cytochrome b6-f complex are cytochrome b6, subunit IV (17 kDa polypeptide, PetD), cytochrome f and the Rieske protein, while the 4 small subunits are PetG, PetL, PetM and PetN. The complex functions as a dimer. The cofactor is heme b. Heme c serves as cofactor.

Its subcellular location is the plastid. The protein resides in the chloroplast thylakoid membrane. Functionally, component of the cytochrome b6-f complex, which mediates electron transfer between photosystem II (PSII) and photosystem I (PSI), cyclic electron flow around PSI, and state transitions. The sequence is that of Cytochrome b6 from Vitis vinifera (Grape).